Consider the following 413-residue polypeptide: Phosphopentomutase (413 aa).

Mn(2+) is bound by residues D11, D306, H311, D347, H348, and H359.

This sequence belongs to the phosphopentomutase family. It depends on Mn(2+) as a cofactor.

The protein resides in the cytoplasm. The catalysed reaction is 2-deoxy-alpha-D-ribose 1-phosphate = 2-deoxy-D-ribose 5-phosphate. The enzyme catalyses alpha-D-ribose 1-phosphate = D-ribose 5-phosphate. It participates in carbohydrate degradation; 2-deoxy-D-ribose 1-phosphate degradation; D-glyceraldehyde 3-phosphate and acetaldehyde from 2-deoxy-alpha-D-ribose 1-phosphate: step 1/2. Isomerase that catalyzes the conversion of deoxy-ribose 1-phosphate (dRib-1-P) and ribose 1-phosphate (Rib-1-P) to deoxy-ribose 5-phosphate (dRib-5-P) and ribose 5-phosphate (Rib-5-P), respectively. The sequence is that of Phosphopentomutase from Helicobacter pylori (strain P12).